Here is a 187-residue protein sequence, read N- to C-terminus: Elongation factor P (187 aa).

It belongs to the elongation factor P family.

The protein resides in the cytoplasm. It participates in protein biosynthesis; polypeptide chain elongation. Involved in peptide bond synthesis. Stimulates efficient translation and peptide-bond synthesis on native or reconstituted 70S ribosomes in vitro. Probably functions indirectly by altering the affinity of the ribosome for aminoacyl-tRNA, thus increasing their reactivity as acceptors for peptidyl transferase. The chain is Elongation factor P from Desulfotalea psychrophila (strain LSv54 / DSM 12343).